A 492-amino-acid polypeptide reads, in one-letter code: Phosphatidylinositol-glycan biosynthesis class W protein (492 aa).

Transmembrane regions (helical) follow at residues 26-46, 59-79, 82-102, 127-147, and 156-176; these read FILTLMPISVLFQRVVFATFF, FILEFFFIIVPFISAITFTEL, FLIVGMLITCLVVPMFAQKNV, YRAFVMAATCICILAVDFQVF, and TYGISLMDIGVGSVVLSGALV. The tract at residues 185–216 is disordered; it reads IEKQQKKKREEEEDDNDKINKTSSSSSSSSSA. An N-linked (GlcNAc...) asparagine glycan is attached at Asn-204. The segment covering 205-216 has biased composition (low complexity); sequence KTSSSSSSSSSA. A helical transmembrane segment spans residues 264-284; the sequence is YGLHWNFFFTLGFVSISLAFL. Residue Asn-289 is glycosylated (N-linked (GlcNAc...) asparagine). The next 4 helical transmembrane spans lie at 290-310, 331-351, 364-384, and 399-419; these read ISAILGVVLICVYQFLLNSFG, ICSFVGYLAIYLIGTKIGTEL, FATKLLISSIVFYILWILCEI, and VLAILSINLFNFSINILITLI. N-linked (GlcNAc...) asparagine glycosylation is present at Asn-424. 2 consecutive transmembrane segments (helical) span residues 437 to 457 and 464 to 484; these read LFIFLLGNILTGLINFSMKTI and SMIIITSYTFALCLLAFILDY.

Belongs to the PIGW family.

The protein resides in the endoplasmic reticulum membrane. It participates in glycolipid biosynthesis; glycosylphosphatidylinositol-anchor biosynthesis. Probable acetyltransferase, which acetylates the inositol ring of phosphatidylinositol during biosynthesis of GPI-anchor. The polypeptide is Phosphatidylinositol-glycan biosynthesis class W protein (Dictyostelium discoideum (Social amoeba)).